Consider the following 505-residue polypeptide: Maturase K (505 aa).

Belongs to the intron maturase 2 family. MatK subfamily.

The protein localises to the plastid. It is found in the chloroplast. Its function is as follows. Usually encoded in the trnK tRNA gene intron. Probably assists in splicing its own and other chloroplast group II introns. The sequence is that of Maturase K from Sciadopitys verticillata (Japanese umbrella-pine).